An 879-amino-acid chain; its full sequence is DNA mismatch repair protein MutS (879 aa).

629 to 636 (GPNMGGKS) contacts ATP.

The protein belongs to the DNA mismatch repair MutS family.

This protein is involved in the repair of mismatches in DNA. It is possible that it carries out the mismatch recognition step. This protein has a weak ATPase activity. This Erythrobacter litoralis (strain HTCC2594) protein is DNA mismatch repair protein MutS.